The sequence spans 357 residues: Protein pelota homolog (357 aa).

It belongs to the eukaryotic release factor 1 family. Pelota subfamily. Monomer. A divalent metal cation is required as a cofactor.

It is found in the cytoplasm. In terms of biological role, may function in recognizing stalled ribosomes, interact with stem-loop structures in stalled mRNA molecules, and effect endonucleolytic cleavage of the mRNA. May play a role in the release non-functional ribosomes and degradation of damaged mRNAs. Has endoribonuclease activity. The protein is Protein pelota homolog of Thermococcus gammatolerans (strain DSM 15229 / JCM 11827 / EJ3).